The chain runs to 526 residues: MRLAAFSLFLAPLLLAQPAAAATLSVCTEASPEGFDVVQYNSLTTTNASADVLMNRLVEFDAGKGTVVPSLAERWSVSDDGLSYRFDLRQGVHFHSTAYFKPSRTLDADDVVFSFQRMLDPANPWHKVAQNGFPHAQSMQLPELIKRVEKSGDHQVLIVLDHPDATFLPMLSMGFASIYSAEYADQLMKAGTPEKLNTAPIGSGPFVFKRFQKDAVVRYAANPEYFAGKPAVDALIFAITPDANVRLQKLRRGECQIALSPKPLDVESARKDASLKVEQTPAFMTAFVALNTQHPPLDDPKVRQAINLAFDRTSYLQAVFEGSASAATGIYPPNTWSYARDIPAYPHDPEQARKLLAGKQLPELNIWTRPSGSLLNPNPSLGAQLLQADLAEAGIKANIRVIEWGELIRRAKNGEHDLLFMGWAGDNGDPDNFLTPQFSCASVKSGLNFARYCDPGLDKLIADGKAASSQEQRTGLYHQAQKLIHEQALWLPLAHPTAFALTRQEVQGYQVNPFGRQDFSRVAVKR.

Positions 1 to 21 (MRLAAFSLFLAPLLLAQPAAA) are cleaved as a signal peptide.

Belongs to the bacterial solute-binding protein 5 family. In terms of assembly, the complex is composed of two ATP-binding proteins (DppD and DppF), two transmembrane proteins (DppB and DppC) and a solute-binding protein (DppA5). Five orthologous SBPs (DppA1-A5) are present in P.aeruginosa, which increases the substrate specificity of the DppBCDF transporter.

Part of the ABC transporter DppABCDF involved in the uptake of various di/tripeptides. This Pseudomonas aeruginosa (strain UCBPP-PA14) protein is Probable di/tripeptide-binding protein 5.